The chain runs to 134 residues: ATP synthase epsilon chain (134 aa).

This sequence belongs to the ATPase epsilon chain family. F-type ATPases have 2 components, CF(1) - the catalytic core - and CF(0) - the membrane proton channel. CF(1) has five subunits: alpha(3), beta(3), gamma(1), delta(1), epsilon(1). CF(0) has three main subunits: a, b and c.

It is found in the cell membrane. Produces ATP from ADP in the presence of a proton gradient across the membrane. The sequence is that of ATP synthase epsilon chain from Ruminiclostridium cellulolyticum (strain ATCC 35319 / DSM 5812 / JCM 6584 / H10) (Clostridium cellulolyticum).